The sequence spans 1066 residues: Ubiquitin conjugation factor E4 A (1066 aa).

The segment at 33–57 (KEQLKQQSDELPASPDDSDNSVSES) is disordered. Residue Lys-386 is modified to N6-acetyllysine. The region spanning 987 to 1061 (DACDEFLDPI…QRWLAERKQQ (75 aa)) is the U-box domain.

Belongs to the ubiquitin conjugation factor E4 family.

The protein localises to the cytoplasm. The catalysed reaction is S-ubiquitinyl-[E2 ubiquitin-conjugating enzyme]-L-cysteine + [acceptor protein]-L-lysine = [E2 ubiquitin-conjugating enzyme]-L-cysteine + N(6)-ubiquitinyl-[acceptor protein]-L-lysine.. Its pathway is protein modification; protein ubiquitination. In terms of biological role, ubiquitin-protein ligase that probably functions as an E3 ligase in conjunction with specific E1 and E2 ligases. May also function as an E4 ligase mediating the assembly of polyubiquitin chains on substrates ubiquitinated by another E3 ubiquitin ligase. Mediates 'Lys-48'-linked polyubiquitination of substrates. The polypeptide is Ubiquitin conjugation factor E4 A (Pongo abelii (Sumatran orangutan)).